The following is a 568-amino-acid chain: Zinc finger protein 76 (568 aa).

Lys-24 participates in a covalent cross-link: Glycyl lysine isopeptide (Lys-Gly) (interchain with G-Cter in SUMO2). Repeat copies occupy residues 34-45, 62-73, and 88-99. Residues 34 to 99 form a 3 X 12 AA approximate repeats region; it reads IQLEDGTTAY…LEDGSTAYIH (66 aa). 7 consecutive C2H2-type zinc fingers follow at residues 165–189, 195–219, 225–249, 255–279, 285–309, 315–339, and 345–368; these read FRCG…ERAH, YRCD…VRTH, YKCP…VRTH, FRCP…VRTH, YTCP…VRIH, YVCT…HVVH, and YTCS…RSAH. The tract at residues 365–402 is disordered; sequence RSAHGELEATEESEQALYEQQQLEAASAAEESPPPKPT. Over residues 379–395 the composition is skewed to low complexity; the sequence is QALYEQQQLEAASAAEE.

The protein belongs to the krueppel C2H2-type zinc-finger protein family.

Its subcellular location is the nucleus. May be involved in transcriptional regulation. The sequence is that of Zinc finger protein 76 (Znf76) from Mus musculus (Mouse).